A 653-amino-acid chain; its full sequence is Endoglin (653 aa).

The N-terminal stretch at 1-24 is a signal peptide; it reads MDRGVLPQAIALLLAVCSFGPTAG. Residues 25–581 lie on the Extracellular side of the membrane; it reads LAEGVQCDLQ…IVSPGLPDKG (557 aa). An OR1, N-terminal part region spans residues 27-44; it reads EGVQCDLQPVDPKVTYTT. A required for interaction with GDF2 region spans residues 27 to 336; it reads EGVQCDLQPV…RSCGSGLQPS (310 aa). 7 disulfides stabilise this stretch: Cys-31-Cys-206, Cys-51-Cys-181, Cys-241-Cys-329, Cys-349-Cys-381, Cys-362-Cys-442, Cys-393-Cys-411, and Cys-493-Cys-549. The OR2 stretch occupies residues 45 to 198; that stretch reads SQVSEGCVAH…MGHTLEWKSH (154 aa). Asn-57 is a glycosylation site (N-linked (GlcNAc...) asparagine). Residues 199-329 are OR1, C-terminal part; sequence TQASVLGCHL…SVISLQDRSC (131 aa). The segment at 269–281 is essential for interaction with GDF2; sequence KAWTTGEYSFKIF. Residue Asn-306 is glycosylated (N-linked (GlcNAc...) asparagine). A ZP domain is found at 362 to 512; sequence CSDDVMTLVL…MVDLIQNQEA (151 aa). Residues 582–606 traverse the membrane as a helical segment; that stretch reads LVLPAVLGITFGAFLIGALLTAALW. At 607-653 the chain is on the cytoplasmic side; that stretch reads YIHSHTRHPGKREPVVAVAAPASSESSSTNHSIGSTQSTPCSTSSMA. Positions 625 to 634 are enriched in low complexity; that stretch reads AAPASSESSS. The disordered stretch occupies residues 625–653; the sequence is AAPASSESSSTNHSIGSTQSTPCSTSSMA. Residues 635-653 show a composition bias toward polar residues; sequence TNHSIGSTQSTPCSTSSMA. Ser-641 and Ser-644 each carry phosphoserine; by TGFBR1.

In terms of assembly, homodimer; disulfide-linked. Forms a heteromeric complex with the signaling receptors for transforming growth factor-beta: TGFBR1 and/or TGFBR2. It is able to bind TGFB1 and TGFB2 with high affinity, but not TGFB3. Interacts with GDF2, forming a heterotetramer with a 2:2 stoichiometry. Interacts with ACVRL1. Can form a heteromeric complex with GDF2 and ACVRL1. Interacts with BMP10. Interacts with DYNLT4. Interacts with ARRB2.

Its subcellular location is the cell membrane. Its function is as follows. Vascular endothelium glycoprotein that plays an important role in the regulation of angiogenesis. Required for normal structure and integrity of adult vasculature. Regulates the migration of vascular endothelial cells. Required for normal extraembryonic angiogenesis and for embryonic heart development. May regulate endothelial cell shape changes in response to blood flow, which drive vascular remodeling and establishment of normal vascular morphology during angiogenesis. May play a role in the binding of endothelial cells to integrins. Acts as a TGF-beta coreceptor and is involved in the TGF-beta/BMP signaling cascade that ultimately leads to the activation of SMAD transcription factors. Required for GDF2/BMP9 signaling through SMAD1 in endothelial cells and modulates TGFB1 signaling through SMAD3. The sequence is that of Endoglin (ENG) from Sus scrofa (Pig).